A 91-amino-acid chain; its full sequence is uncharacterized protein (91 aa).

It localises to the plastid. The protein resides in the chloroplast. This is an uncharacterized protein from Phalaenopsis aphrodite subsp. formosana (Moth orchid).